Consider the following 545-residue polypeptide: MVSLLRCQSFKPSSSLICSLALSAAFALSSSAFAEETKPAENKPATPVVSPPKATAQPANKNQVRFTKTGTFDGDSVVKLARKLASKPYVVLKDPLPAGLAKLSYDEYRDIRFNPVSSIWRDQGLPFQMQMFHRGFYFQDLIEIAIVEANQATHLAYEPKYFTAGEVITQALPNDDIGYSGFRIHNQLNTNGVYDELMVFQGASYFRALGKGNSYGLSARGLALKTADPEGEEFPIFRAFWVERPSYDSNLIVVHALLDSPSVAGAYRFSVRPGDNTQIDVEATLFPRVELSKVGLAPSTSMFLHSLNGRHDTDDFRPEVHDSDGLLMFNGRGEHLWRPLANPRQLQVSAFSDNSPQGFGLIQRERNYASYQDLEAHYERRPSLWIEPVGNWGQGAVVLTEIPTESEIHDNIVSFWKPRQPIPAGSEYHFAYRMSWGDEPVAKTNSVVVSRTASGRADIAKATPRRLFVVDYHLNGAMPDELPLAKVESSGGVIANVVIARNAANNGYRLAFELEPEDKELIELRAELKFSTPRQVETWLYRWTL.

Residues 1–34 form the signal peptide; it reads MVSLLRCQSFKPSSSLICSLALSAAFALSSSAFA. The tract at residues 38–60 is disordered; it reads KPAENKPATPVVSPPKATAQPAN.

The protein belongs to the OpgD/OpgG family.

It is found in the periplasm. Its pathway is glycan metabolism; osmoregulated periplasmic glucan (OPG) biosynthesis. In terms of biological role, involved in the biosynthesis of osmoregulated periplasmic glucans (OPGs). This Shewanella sp. (strain MR-4) protein is Glucans biosynthesis protein G.